A 135-amino-acid polypeptide reads, in one-letter code: MQSSSPSTSHCSQIPIKIQHHIAKKRQVRRRRVDLDCGCSYYIHLDCINHGFTHRGVHHCASSNEWRLYLRDNKSPIFHDNQTQPTTIQQQIQFTNISNQVQPQLEEGTGDSQMFSQLPHLDDLTVSDWSFFKSL.

The Nuclear localization signal signature appears at 17–32; sequence KIQHHIAKKRQVRRRR. Residues 37–54 fold into a zinc finger; sequence CGCSYYIHLDCINHGFTH. The interval 120–135 is transactivation; the sequence is HLDDLTVSDWSFFKSL.

Belongs to the geminiviridae transcriptional activator protein family. In terms of assembly, monomer. Homodimer. Homooligomer. Self-interaction correlates with nuclear localization and efficient activation of transcription. Monomers suppress local silencing by interacting with and inactivating host adenosine kinase 2 (ADK2) in the cytoplasm. Interacts with and inhibits host SNF1 kinase. Binds to ssDNA. Phosphorylated.

Its subcellular location is the host nucleus. It is found in the host cytoplasm. Its function is as follows. Strong activator of the late viral genes promoters. Acts as a suppressor of RNA-mediated gene silencing, also known as post-transcriptional gene silencing (PTGS), a mechanism of plant viral defense that limits the accumulation of viral RNAs. TrAP suppresses the host RNA silencing by inhibiting adenosine kinase 2 (ADK2), a kinase involved in a general methylation pathway. Also suppresses the host basal defense by interacting with and inhibiting SNF1 kinase, a key regulator of cell metabolism implicated in innate antiviral defense. Determines pathogenicity. In Tomato yellow leaf curl Sardinia virus (isolate Spain-2) (TYLCSV), this protein is Transcriptional activator protein.